Consider the following 369-residue polypeptide: Pulmonary surfactant-associated protein D (369 aa).

A signal peptide spans Met-1–Gly-20. 2 positions are modified to S-nitrosocysteine: Cys-35 and Cys-40. Residues Ser-41–Leu-215 form a disordered region. The Collagen-like domain occupies Gly-46–Ala-216. Residues Leu-47–Asp-65 are compositionally biased toward basic and acidic residues. Pro-78 is modified (4-hydroxyproline). At Lys-87 the chain carries 5-hydroxylysine. Residue Asn-90 is glycosylated (N-linked (GlcNAc...) asparagine). Residue Pro-96 is modified to 4-hydroxyproline. At Lys-99 the chain carries 5-hydroxylysine. Over residues Gly-139–Gly-148 the composition is skewed to gly residues. 2 positions are modified to 4-hydroxyproline: Pro-165 and Pro-171. The span at Pro-165–Ala-191 shows a compositional bias: low complexity. Basic and acidic residues predominate over residues Lys-198–Lys-210. Residues Glu-217–Phe-248 adopt a coiled-coil conformation. Residues Val-254–Phe-369 form the C-type lectin domain. 2 disulfides stabilise this stretch: Cys-275–Cys-367 and Cys-345–Cys-359.

This sequence belongs to the SFTPD family. In terms of assembly, oligomeric complex of 4 set of homotrimers. In terms of processing, hydroxylation on proline residues within the sequence motif, GXPG, is most likely to be 4-hydroxy as this fits the requirement for 4-hydroxylation in vertebrates. Post-translationally, S-nitrosylation at Cys-35 and Cys-40 alters the quaternary structure which results in a pro-inflammatory chemoattractive signaling activity with macrophages.

It is found in the secreted. It localises to the extracellular space. The protein localises to the extracellular matrix. The protein resides in the surface film. Contributes to the lung's defense against inhaled microorganisms, organic antigens and toxins. Interacts with compounds such as bacterial lipopolysaccharides, oligosaccharides and fatty acids and modulates leukocyte action in immune response. May participate in the extracellular reorganization or turnover of pulmonary surfactant. Binds strongly maltose residues and to a lesser extent other alpha-glucosyl moieties. The chain is Pulmonary surfactant-associated protein D (SFTPD) from Bos taurus (Bovine).